Reading from the N-terminus, the 503-residue chain is Probable cytosol aminopeptidase (503 aa).

Positions 270 and 275 each coordinate Mn(2+). Residue Lys282 is part of the active site. 3 residues coordinate Mn(2+): Asp293, Asp352, and Glu354. The active site involves Arg356.

It belongs to the peptidase M17 family. The cofactor is Mn(2+).

It is found in the cytoplasm. The enzyme catalyses Release of an N-terminal amino acid, Xaa-|-Yaa-, in which Xaa is preferably Leu, but may be other amino acids including Pro although not Arg or Lys, and Yaa may be Pro. Amino acid amides and methyl esters are also readily hydrolyzed, but rates on arylamides are exceedingly low.. It carries out the reaction Release of an N-terminal amino acid, preferentially leucine, but not glutamic or aspartic acids.. In terms of biological role, presumably involved in the processing and regular turnover of intracellular proteins. Catalyzes the removal of unsubstituted N-terminal amino acids from various peptides. This Enterobacter sp. (strain 638) protein is Probable cytosol aminopeptidase.